Here is a 504-residue protein sequence, read N- to C-terminus: Ribosomal protein uS12 methylthiotransferase RimO (504 aa).

In terms of domain architecture, MTTase N-terminal spans 19–135 (KKVGFVSLGC…ILAASGIEPR (117 aa)). [4Fe-4S] cluster is bound by residues cysteine 28, cysteine 64, cysteine 98, cysteine 214, cysteine 218, and cysteine 221. One can recognise a Radical SAM core domain in the interval 200–430 (ATPKYMAYIK…MSLQKQISKK (231 aa)). A TRAM domain is found at 433–504 (KALIGREFDV…HDYDLVARLL (72 aa)).

Belongs to the methylthiotransferase family. RimO subfamily. [4Fe-4S] cluster is required as a cofactor.

It is found in the cytoplasm. It carries out the reaction L-aspartate(89)-[ribosomal protein uS12]-hydrogen + (sulfur carrier)-SH + AH2 + 2 S-adenosyl-L-methionine = 3-methylsulfanyl-L-aspartate(89)-[ribosomal protein uS12]-hydrogen + (sulfur carrier)-H + 5'-deoxyadenosine + L-methionine + A + S-adenosyl-L-homocysteine + 2 H(+). Catalyzes the methylthiolation of an aspartic acid residue of ribosomal protein uS12. This Koribacter versatilis (strain Ellin345) protein is Ribosomal protein uS12 methylthiotransferase RimO.